A 397-amino-acid polypeptide reads, in one-letter code: Tryptophan synthase beta chain (397 aa).

An N6-(pyridoxal phosphate)lysine modification is found at Lys-87.

The protein belongs to the TrpB family. Tetramer of two alpha and two beta chains. Requires pyridoxal 5'-phosphate as cofactor.

The enzyme catalyses (1S,2R)-1-C-(indol-3-yl)glycerol 3-phosphate + L-serine = D-glyceraldehyde 3-phosphate + L-tryptophan + H2O. Its pathway is amino-acid biosynthesis; L-tryptophan biosynthesis; L-tryptophan from chorismate: step 5/5. Its function is as follows. The beta subunit is responsible for the synthesis of L-tryptophan from indole and L-serine. The polypeptide is Tryptophan synthase beta chain (Citrobacter koseri (strain ATCC BAA-895 / CDC 4225-83 / SGSC4696)).